Reading from the N-terminus, the 1451-residue chain is ABC transporter G family member 32 (1451 aa).

An ABC transporter 1 domain is found at G162 to Q435. G195–T202 contributes to the ATP binding site. The ABC transmembrane type-2 1 domain maps to A513 to F725. Helical transmembrane passes span F531–F551, G563–A583, I618–F638, L650–G670, V674–I694, and I760–L780. Residues I809–T835 form a disordered region. Residues C813–Q823 show a composition bias toward basic and acidic residues. Residues L853–E1105 enclose the ABC transporter 2 domain. Residue G898–T905 participates in ATP binding. An ABC transmembrane type-2 2 domain is found at T1178 to F1392. 7 helical membrane-spanning segments follow: residues Y1197–W1217, Y1237–V1257, L1285–F1305, F1312–M1332, I1342–I1362, W1373–G1393, and L1423–I1443.

It belongs to the ABC transporter superfamily. ABCG family. PDR (TC 3.A.1.205) subfamily.

It localises to the membrane. In terms of biological role, may be a general defense protein. The sequence is that of ABC transporter G family member 32 from Oryza sativa subsp. japonica (Rice).